We begin with the raw amino-acid sequence, 680 residues long: Galactose oxidase (680 aa).

A signal peptide spans 1–24 (MKHFLSLALCFSSINAVAVTVPHK). Residues 25-41 (SGGTGSPEGSLQFLSLR) constitute a propeptide that is removed on maturation. The region spanning 42–189 (ASAPIGSAIS…SIAEINVFQA (148 aa)) is the F5/8 type C domain. A disulfide bridge links C59 with C68. Kelch repeat units lie at residues 223–268 (RVLM…HDMF), 279–321 (QIVV…TMSD), 323–372 (RVFT…LYRS), 436–490 (KILT…VLPD), and 492–544 (STFI…LLLP). Residues 269 to 313 (CPGISMDGNGQIVVTGGNDAKKTSLYDSSSDSWIPGPDMQVARGY) constitute a cross-link (3'-(S-cysteinyl)-tyrosine (Cys-Tyr)). Position 313 (Y313) interacts with Cu cation. Cu cation is bound by residues Y536 and H537. Y536 functions as the Proton acceptor in the catalytic mechanism. C556 and C559 are disulfide-bonded. H622 lines the Cu cation pocket.

As to quaternary structure, monomer. It depends on Cu(2+) as a cofactor. In terms of processing, galactose oxidase contains a protein-derived free radical cofactor. In the active state, Tyr-313, which is cross-linked to Cys-269 via a thioether bond, is oxidized to a radical and acts with Cu(2+) as a two-electron acceptor in the oxidation reaction. The cross-link is believed to modulate the redox potential of the tyrosyl radical, which is further stabilized by a stacking interaction with Trp-331 in the active site. The post-translational formation of the cross-link is closely linked to the propeptide cleavage event, and both are copper-dependent, autocatalytic processes. The propeptide may act as an intramolecular chaperone, facilitating thioester bond formation and copper binding by positioning of active-site residues, including copper ligands.

The protein localises to the secreted. It catalyses the reaction D-galactose + O2 = D-galacto-hexodialdose + H2O2. Functionally, catalyzes the sterospecific oxidation of primary alcohols to the corresponding aldehydes. The biologically relevant substrate of the enzyme is not known as the enzyme exhibits broad substrate specificity from small alcohols through sugars to oligo- and polysaccharides. The protein is Galactose oxidase (GAOA) of Gibberella zeae (strain ATCC MYA-4620 / CBS 123657 / FGSC 9075 / NRRL 31084 / PH-1) (Wheat head blight fungus).